The sequence spans 148 residues: Phospholipase A2-alpha (148 aa).

Positions 1 to 20 are cleaved as a signal peptide; that stretch reads MAAPIILFSFLLFFSVSVSA. 6 disulfides stabilise this stretch: C38–C66, C42–C72, C47–C122, C59–C79, C78–C105, and C85–C98. Ca(2+) is bound by residues Y58, G60, and Y63. Residue H82 is part of the active site. Residue D83 coordinates Ca(2+).

It belongs to the phospholipase A2 family. Interacts with MYB30. Ca(2+) is required as a cofactor. Ubiquitous but expressed at a low level.

The protein localises to the secreted. Its subcellular location is the golgi apparatus. It is found in the cytoplasmic vesicle. It localises to the nucleus. It carries out the reaction a 1,2-diacyl-sn-glycero-3-phosphocholine + H2O = a 1-acyl-sn-glycero-3-phosphocholine + a fatty acid + H(+). Its function is as follows. PA2 catalyzes the calcium-dependent hydrolysis of the 2-acyl groups in 3-sn-phosphoglycerides. Releases lysophospholipids (LPLs) and free fatty acids (FFAs) from membrane phospholipids in response to hormones and other external stimuli. Modulates the trafficking of PIN proteins to the plasma membrane. Negatively regulates MYB30 transcriptional activity and hypersensitive response control. The polypeptide is Phospholipase A2-alpha (Arabidopsis thaliana (Mouse-ear cress)).